The chain runs to 173 residues: Translation initiation factor IF-3 (173 aa).

The protein belongs to the IF-3 family. As to quaternary structure, monomer.

The protein resides in the cytoplasm. Functionally, IF-3 binds to the 30S ribosomal subunit and shifts the equilibrium between 70S ribosomes and their 50S and 30S subunits in favor of the free subunits, thus enhancing the availability of 30S subunits on which protein synthesis initiation begins. The chain is Translation initiation factor IF-3 from Methylorubrum extorquens (strain CM4 / NCIMB 13688) (Methylobacterium extorquens).